A 399-amino-acid polypeptide reads, in one-letter code: Dual specificity mitogen-activated protein kinase kinase 4 (399 aa).

The segment at 1-40 is disordered; sequence MAAPSPSGGGGSGGGSGSGTPGPVGSPAPGHPAVSSMQGK. Ala-2 bears the N-acetylalanine mark. The segment covering 7–22 has biased composition (gly residues); that stretch reads SGGGGSGGGSGSGTPG. The segment at 37–52 is d domain; that stretch reads MQGKRKALKLNFANPP. Asymmetric dimethylarginine; alternate is present on Arg-58. Arg-58 carries the post-translational modification Omega-N-methylarginine; alternate. Ser-90 bears the Phosphoserine mark. One can recognise a Protein kinase domain in the interval 102 to 367; sequence LKDLGEIGRG…YKELLKHPFI (266 aa). ATP is bound by residues 108-116 and Lys-131; that span reads IGRGAYGSV. Asp-229 serves as the catalytic Proton acceptor. Position 257 is a phosphoserine; by MAP3K (Ser-257). Residue Thr-261 is modified to Phosphothreonine; by MAP3K. The DVD domain stretch occupies residues 364 to 387; it reads HPFILMYEERAVEVACYVCKILDQ.

Belongs to the protein kinase superfamily. STE Ser/Thr protein kinase family. MAP kinase kinase subfamily. Interacts with SPAG9. Interacts (via its D domain) with its substrates MAPK8/JNK1, MAPK9/JNK2, MAPK10/JNK3, MAPK11 and MAPK14. Interacts (via its DVD domain) with MAP3Ks activators like MAP3K1/MEKK1 and MAP3K11/MLK3. Interacts with ARRB1, ARRB2 and MAPK8IP3/JIP3. Activated by phosphorylation on Ser-257 and Thr-261 by MAP kinase kinase kinases (MAP3Ks). Abundant expression is seen in the skeletal muscle. It is also widely expressed in other tissues.

It is found in the cytoplasm. The protein resides in the nucleus. The enzyme catalyses L-seryl-[protein] + ATP = O-phospho-L-seryl-[protein] + ADP + H(+). It carries out the reaction L-threonyl-[protein] + ATP = O-phospho-L-threonyl-[protein] + ADP + H(+). The catalysed reaction is L-tyrosyl-[protein] + ATP = O-phospho-L-tyrosyl-[protein] + ADP + H(+). With respect to regulation, activated in response to a variety of cellular stresses, including UV and gamma-irradiation, heat shock, hyperosmolarity, T-cell receptor stimulation, peroxide and inflammatory cytokines. Also activated by developmental cues. MAP2K4/MKK4 is activated by the majority of MKKKs, such as MAP3K5/ASK1, MAP3K1/MEKK1, MAP3K7/TAK1, MAP3K10/MLK2, MAP3K11/MLK3, MAP3K12/DLK and MAP3K13/LZK. Its function is as follows. Dual specificity protein kinase which acts as an essential component of the MAP kinase signal transduction pathway. Essential component of the stress-activated protein kinase/c-Jun N-terminal kinase (SAP/JNK) signaling pathway. With MAP2K7/MKK7, is the one of the only known kinase to directly activate the stress-activated protein kinase/c-Jun N-terminal kinases MAPK8/JNK1, MAPK9/JNK2 and MAPK10/JNK3. MAP2K4/MKK4 and MAP2K7/MKK7 both activate the JNKs by phosphorylation, but they differ in their preference for the phosphorylation site in the Thr-Pro-Tyr motif. MAP2K4 shows preference for phosphorylation of the Tyr residue and MAP2K7/MKK7 for the Thr residue. The phosphorylation of the Thr residue by MAP2K7/MKK7 seems to be the prerequisite for JNK activation at least in response to pro-inflammatory cytokines, while other stimuli activate both MAP2K4/MKK4 and MAP2K7/MKK7 which synergistically phosphorylate JNKs. MAP2K4 is required for maintaining peripheral lymphoid homeostasis. The MKK/JNK signaling pathway is also involved in mitochondrial death signaling pathway, including the release cytochrome c, leading to apoptosis. Whereas MAP2K7/MKK7 exclusively activates JNKs, MAP2K4/MKK4 additionally activates the p38 MAPKs MAPK11, MAPK12, MAPK13 and MAPK14. This Homo sapiens (Human) protein is Dual specificity mitogen-activated protein kinase kinase 4 (MAP2K4).